Here is a 170-residue protein sequence, read N- to C-terminus: Probable chemoreceptor glutamine deamidase CheD 3 (170 aa).

Belongs to the CheD family.

The catalysed reaction is L-glutaminyl-[protein] + H2O = L-glutamyl-[protein] + NH4(+). In terms of biological role, probably deamidates glutamine residues to glutamate on methyl-accepting chemotaxis receptors (MCPs), playing an important role in chemotaxis. In Dechloromonas aromatica (strain RCB), this protein is Probable chemoreceptor glutamine deamidase CheD 3.